The sequence spans 392 residues: Tryptophan synthase beta chain (392 aa).

Residue Lys-84 is modified to N6-(pyridoxal phosphate)lysine.

It belongs to the TrpB family. In terms of assembly, tetramer of two alpha and two beta chains. The cofactor is pyridoxal 5'-phosphate.

The catalysed reaction is (1S,2R)-1-C-(indol-3-yl)glycerol 3-phosphate + L-serine = D-glyceraldehyde 3-phosphate + L-tryptophan + H2O. Its pathway is amino-acid biosynthesis; L-tryptophan biosynthesis; L-tryptophan from chorismate: step 5/5. The beta subunit is responsible for the synthesis of L-tryptophan from indole and L-serine. In Chlamydia trachomatis serovar D (strain ATCC VR-885 / DSM 19411 / UW-3/Cx), this protein is Tryptophan synthase beta chain (trpB).